Reading from the N-terminus, the 213-residue chain is Pyridoxine/pyridoxamine 5'-phosphate oxidase (213 aa).

Residues 60–65 (RMVLMK), 75–76 (YS), Lys82, and Gln104 contribute to the FMN site. Lys65 lines the substrate pocket. Residues Tyr122 and Arg126 each contribute to the substrate site. Residues 139–140 (QS) and Trp184 each bind FMN. Residue 190-192 (RLH) coordinates substrate. Residue Arg194 participates in FMN binding.

Belongs to the pyridoxamine 5'-phosphate oxidase family. As to quaternary structure, homodimer. The cofactor is FMN.

It catalyses the reaction pyridoxamine 5'-phosphate + O2 + H2O = pyridoxal 5'-phosphate + H2O2 + NH4(+). The enzyme catalyses pyridoxine 5'-phosphate + O2 = pyridoxal 5'-phosphate + H2O2. It participates in cofactor metabolism; pyridoxal 5'-phosphate salvage; pyridoxal 5'-phosphate from pyridoxamine 5'-phosphate: step 1/1. It functions in the pathway cofactor metabolism; pyridoxal 5'-phosphate salvage; pyridoxal 5'-phosphate from pyridoxine 5'-phosphate: step 1/1. Catalyzes the oxidation of either pyridoxine 5'-phosphate (PNP) or pyridoxamine 5'-phosphate (PMP) into pyridoxal 5'-phosphate (PLP). This Nitrobacter winogradskyi (strain ATCC 25391 / DSM 10237 / CIP 104748 / NCIMB 11846 / Nb-255) protein is Pyridoxine/pyridoxamine 5'-phosphate oxidase.